The sequence spans 343 residues: uncharacterized protein (343 aa).

Disordered stretches follow at residues 1-25 (MSSK…LSGT), 62-119 (KNIR…DCSD), and 169-188 (NPKI…TKKS). Basic residues predominate over residues 62–71 (KNIRQFKKSQ). Residues 72–81 (NKTDTEKSGE) are compositionally biased toward basic and acidic residues. Positions 83–107 (NDSDYSDYSDNSDDVDDLDDVDDLN) are enriched in acidic residues.

This is an uncharacterized protein from Acanthamoeba polyphaga (Amoeba).